Reading from the N-terminus, the 299-residue chain is 4-diphosphocytidyl-2-C-methyl-D-erythritol kinase (299 aa).

The active site involves Lys17. 99 to 109 (PLASGLGGGSS) is an ATP binding site. Asp142 is a catalytic residue.

It belongs to the GHMP kinase family. IspE subfamily.

It catalyses the reaction 4-CDP-2-C-methyl-D-erythritol + ATP = 4-CDP-2-C-methyl-D-erythritol 2-phosphate + ADP + H(+). The protein operates within isoprenoid biosynthesis; isopentenyl diphosphate biosynthesis via DXP pathway; isopentenyl diphosphate from 1-deoxy-D-xylulose 5-phosphate: step 3/6. Functionally, catalyzes the phosphorylation of the position 2 hydroxy group of 4-diphosphocytidyl-2C-methyl-D-erythritol. The chain is 4-diphosphocytidyl-2-C-methyl-D-erythritol kinase from Deinococcus radiodurans (strain ATCC 13939 / DSM 20539 / JCM 16871 / CCUG 27074 / LMG 4051 / NBRC 15346 / NCIMB 9279 / VKM B-1422 / R1).